The primary structure comprises 332 residues: Acetyl-coenzyme A carboxylase carboxyl transferase subunit alpha (332 aa).

Residues 44–298 (QLESRAQNLR…KETLVNNLEE (255 aa)) enclose the CoA carboxyltransferase C-terminal domain.

The protein belongs to the AccA family. As to quaternary structure, acetyl-CoA carboxylase is a heterohexamer composed of biotin carboxyl carrier protein (AccB), biotin carboxylase (AccC) and two subunits each of ACCase subunit alpha (AccA) and ACCase subunit beta (AccD).

The protein localises to the cytoplasm. The catalysed reaction is N(6)-carboxybiotinyl-L-lysyl-[protein] + acetyl-CoA = N(6)-biotinyl-L-lysyl-[protein] + malonyl-CoA. The protein operates within lipid metabolism; malonyl-CoA biosynthesis; malonyl-CoA from acetyl-CoA: step 1/1. Component of the acetyl coenzyme A carboxylase (ACC) complex. First, biotin carboxylase catalyzes the carboxylation of biotin on its carrier protein (BCCP) and then the CO(2) group is transferred by the carboxyltransferase to acetyl-CoA to form malonyl-CoA. The protein is Acetyl-coenzyme A carboxylase carboxyl transferase subunit alpha of Crocosphaera subtropica (strain ATCC 51142 / BH68) (Cyanothece sp. (strain ATCC 51142)).